Consider the following 678-residue polypeptide: MENHLPNIFYFPNCVTTFPYRYTQKELDDMKPDERERFKYATFPIIKHRWSHAYVVKDNHVFKLNVETSKRLRRATPPTLSVPVSMNTMLREYITQDGTKISFECYSYLTCKKATSLHDLDDNAIRGLVEGGNRLQLFTNSVGSVKDTVGIFGNPNPFMKVPLKSLHPSMQCKIFESWIHHVPVVLTGDTGVGKTSQVPKLLLWFNYLFGGFVNLSTITFDVQEKPIVLSLPRVALVKLHSETLLTSLGFNEIHKSPVSLKFGNMQEQFVNTRFRRYGIVFSTHKITLNTLFNYSTVILDEVHEHDQTGDIIIAVCRKYIRKLDSLFLMTATLEDDRQRIEEFFTESVFVHIPGGTLFSISEAYVKNSNDSLNKFMYIEEEKRNLVNAIKTYTPPKQSSGIVFVSTVSQCDVYKQYLSERLPYKFYIIHGKIQNINDLLSDIYDNEGVSIIISTPYLESSVTVQNATHVYDTGRVYIPSPYGGREVFISKSMRDQRKGRVGRVKPGMYIYFYDVSELRPIKRIDFEFLHNYVLYSKVFDLQLPEDLFVKPTNMTRLRDVIEYIRSFNISDGVWTRLLSSYYIHILEYAKVYARGGQSAAALDSFERTGNLTDDALDAIKSLNMRAKIISHRKASTHTYALMCRLLFGVYAGKTFIAYHKRPLTGYITMITEHSFIPEY.

Residues 175-351 (FESWIHHVPV…EFFTESVFVH (177 aa)) form the Helicase ATP-binding domain. 188-195 (GDTGVGKT) is a binding site for ATP. The DEXH box signature appears at 300 to 303 (DEVH). A Helicase C-terminal domain is found at 371–546 (SLNKFMYIEE…VFDLQLPEDL (176 aa)).

The protein belongs to the DEAD box helicase family. DEAH subfamily. In terms of assembly, monomer.

It is found in the virion. It catalyses the reaction ATP + H2O = ADP + phosphate + H(+). Its function is as follows. NTP-dependent helicase that catalyzes unidirectional unwinding of 3'tailed duplex RNAs and plays an important role during transcription of early mRNAs, presumably by preventing R-loop formation behind the elongating RNA polymerase. Might also play a role in the export of newly synthesized mRNA chains out of the core into the cytoplasm. Required for replication and propagation of viral particles. The sequence is that of RNA helicase NPH-II (OPG084) from Oryctolagus cuniculus (Rabbit).